The chain runs to 83 residues: MGTVPELASLSFEEALKELENVVRRLESGEAPLDESIELYARGDALRAHCQARLDAAQARIEAIVADRDGKAQGLRPFDETVG.

This sequence belongs to the XseB family. As to quaternary structure, heterooligomer composed of large and small subunits.

Its subcellular location is the cytoplasm. The catalysed reaction is Exonucleolytic cleavage in either 5'- to 3'- or 3'- to 5'-direction to yield nucleoside 5'-phosphates.. Functionally, bidirectionally degrades single-stranded DNA into large acid-insoluble oligonucleotides, which are then degraded further into small acid-soluble oligonucleotides. This Novosphingobium aromaticivorans (strain ATCC 700278 / DSM 12444 / CCUG 56034 / CIP 105152 / NBRC 16084 / F199) protein is Exodeoxyribonuclease 7 small subunit.